Reading from the N-terminus, the 507-residue chain is Transmembrane protein 184 homolog DDB_G0276041 (507 aa).

Helical transmembrane passes span 13 to 33 (IVMLSIGSFFALGSIIIAVIL), 50 to 70 (IVRIIMIAPIYAIHSLLSLFF), 88 to 108 (AYVLYCFFKLLICFLGGEEAL), 141 to 161 (LGLVLQYAIIKPTLAIVAAIL), 179 to 199 (LWITVINNISVLIALYFLVMF), 222 to 242 (VVFFLFWQTVVITVLIWFDAL), and 260 to 280 (FLVCIEMFITSIAMGICFSYS). 6 N-linked (GlcNAc...) asparagine glycosylation sites follow: N360, N375, N470, N473, N477, and N498. A disordered region spans residues 448–500 (NGASNNNNNNNNNNNNINNNNNNNSNNSNNNSNSQFESIDINSNSVNSNKNQS). Over residues 451–500 (SNNNNNNNNNNNNINNNNNNNSNNSNNNSNSQFESIDINSNSVNSNKNQS) the composition is skewed to low complexity.

It belongs to the TMEM184 family.

Its subcellular location is the cell membrane. Functionally, probable transporter. The sequence is that of Transmembrane protein 184 homolog DDB_G0276041 (tmem184B) from Dictyostelium discoideum (Social amoeba).